A 121-amino-acid polypeptide reads, in one-letter code: Large ribosomal subunit protein bL19 (121 aa).

Belongs to the bacterial ribosomal protein bL19 family.

Functionally, this protein is located at the 30S-50S ribosomal subunit interface and may play a role in the structure and function of the aminoacyl-tRNA binding site. The polypeptide is Large ribosomal subunit protein bL19 (Neisseria gonorrhoeae (strain ATCC 700825 / FA 1090)).